A 955-amino-acid chain; its full sequence is GPI inositol-deacylase B (955 aa).

N-linked (GlcNAc...) asparagine glycosylation is present at asparagine 7. A helical transmembrane segment spans residues 8 to 28 (ASVALWTVFTILTIWISFALH). Residue serine 180 is part of the active site. A glycan (N-linked (GlcNAc...) asparagine) is linked at asparagine 431. The next 4 membrane-spanning stretches (helical) occupy residues 489-509 (IAFP…SGGV), 600-620 (LLFS…FWRY), 643-663 (YLSW…FEFI), and 703-723 (PIGV…VVVV). N-linked (GlcNAc...) asparagine glycosylation is present at asparagine 753. The next 3 helical transmembrane spans lie at 772-792 (VIIA…LAFA), 840-860 (TMSV…AVWV), and 870-890 (IFSS…IENL). The N-linked (GlcNAc...) asparagine glycan is linked to asparagine 914. Residues 919–939 (GMMHAFMIHHWFNLLAGWLLI) traverse the membrane as a helical segment. Asparagine 945 carries an N-linked (GlcNAc...) asparagine glycan.

It belongs to the GPI inositol-deacylase family.

Its subcellular location is the endoplasmic reticulum membrane. In terms of biological role, involved in inositol deacylation of GPI-anchored proteins which plays important roles in the quality control and ER-associated degradation of GPI-anchored proteins. This chain is GPI inositol-deacylase B (BST1B), found in Yarrowia lipolytica (strain CLIB 122 / E 150) (Yeast).